Reading from the N-terminus, the 2170-residue chain is Supervillin (2170 aa).

Residues 1–167 (MKRKERIARR…NSRHSRTESG (167 aa)) form an interaction with MYLK region. Disordered regions lie at residues 37–94 (EDTP…HSLE), 107–327 (RRRQ…QSES), 413–444 (PEPL…NKDL), 511–546 (DYTG…GAEA), and 567–643 (RASK…EDEE). The residue at position 50 (Ser50) is a Phosphoserine. 2 stretches are compositionally biased toward polar residues: residues 63 to 73 (PGSSLEKQTPS) and 81 to 90 (GIHSSGSMDT). Over residues 134–166 (SRKDPDVTERRGKSDKQEEQSKDANSRHSRTES) the composition is skewed to basic and acidic residues. The span at 167–195 (GPRTSLVASQDCTPLGSNMSDQEQLLNVE) shows a compositional bias: polar residues. A phosphoserine mark is found at Ser220, Ser227, and Ser241. The span at 230–241 (QIPSSPLQQPAS) shows a compositional bias: polar residues. 2 stretches are compositionally biased toward basic and acidic residues: residues 261 to 272 (PTHEWFLQRDSE) and 286 to 297 (KVREKLVKEESA). Residues 298–313 (RSSPELTSESLTQRRQ) show a composition bias toward polar residues. A phosphoserine mark is found at Ser299 and Ser300. A compositionally biased stretch (basic and acidic residues) spans 427-444 (EDDRLVRGHKDPSGNKDL). Composition is skewed to basic and acidic residues over residues 570-582 (KKPE…ERSA) and 606-615 (ESRKTSERFR). 4 positions are modified to phosphoserine: Ser632, Ser666, Ser728, and Ser761. Residues 743-771 (ASAHQKALARDQANEGRESAEPGEPDSST) are disordered. The segment covering 750 to 762 (LARDQANEGRESA) has biased composition (basic and acidic residues). Tyr809 carries the post-translational modification Phosphotyrosine. Thr811 is subject to Phosphothreonine. A phosphoserine mark is found at Ser857, Ser877, and Ser881. The disordered stretch occupies residues 887 to 909 (AWRPLVEHSGSKGMPGESGKTES). 4 positions are modified to phosphoserine: Ser960, Ser1011, Ser1031, and Ser1077. The tract at residues 1117 to 1137 (HTQEVEQSLKKKRVTESRESQ) is disordered. Basic and acidic residues predominate over residues 1119-1137 (QEVEQSLKKKRVTESRESQ). Arg1159 bears the Omega-N-methylarginine mark. Phosphoserine occurs at positions 1181 and 1184. A Phosphothreonine modification is found at Thr1186. Phosphoserine is present on residues Ser1190, Ser1278, and Ser1361. The interaction with NEB stretch occupies residues 1375 to 1643 (SNINLRSVNL…KFLDWTELKR (269 aa)). 5 Gelsolin-like repeats span residues 1397 to 1496 (KKLM…LGGQ), 1516 to 1638 (IETN…FLDW), 1708 to 1818 (VSVD…FQGG), 1837 to 1938 (WRLY…LGRR), and 1971 to 2078 (ATEF…FPSW). The HP domain occupies 2107–2170 (KLCKTIYPLA…VNLKKSKGLF (64 aa)).

It belongs to the villin/gelsolin family. In terms of assembly, associates with F-actin. Interacts with NEB. Interacts with MYH9. Interacts with MYLK. Interacts with TASOR. As to quaternary structure, interacts with TRIP6. Interacts with DYNLT1. Interacts with KIF14; at midbody during cytokinesis. In terms of tissue distribution, expressed in the heart, tongue and granular cells within the cerebellum.

It is found in the cell membrane. The protein localises to the cytoplasm. Its subcellular location is the cytoskeleton. It localises to the cell projection. The protein resides in the invadopodium. It is found in the podosome. The protein localises to the midbody. Its subcellular location is the cleavage furrow. Its function is as follows. Forms a high-affinity link between the actin cytoskeleton and the membrane. Is among the first costameric proteins to assemble during myogenesis and it contributes to myogenic membrane structure and differentiation. Appears to be involved in myosin II assembly. May modulate myosin II regulation through MLCK during cell spreading, an initial step in cell migration. May play a role in invadopodial function. May be involved in modulation of focal adhesions. Supervillin-mediated down-regulation of focal adhesions involves binding to TRIP6. Plays a role in cytokinesis through KIF14 interaction. This chain is Supervillin (Svil), found in Mus musculus (Mouse).